The sequence spans 136 residues: Small ribosomal subunit protein uS9 (136 aa).

Over residues 103–116 (PLKTEGHLSRDPRA) the composition is skewed to basic and acidic residues. The tract at residues 103–136 (PLKTEGHLSRDPRAKERRKYGLKKARKAPQFSKR) is disordered. A compositionally biased stretch (basic residues) spans 117–136 (KERRKYGLKKARKAPQFSKR).

The protein belongs to the universal ribosomal protein uS9 family.

The chain is Small ribosomal subunit protein uS9 (rpsI) from Prochlorococcus marinus (strain SARG / CCMP1375 / SS120).